A 172-amino-acid chain; its full sequence is NADH-quinone oxidoreductase subunit B 1 (172 aa).

[4Fe-4S] cluster-binding residues include cysteine 42, cysteine 43, cysteine 107, and cysteine 137.

Belongs to the complex I 20 kDa subunit family. NDH-1 is composed of 14 different subunits. Subunits NuoB, C, D, E, F, and G constitute the peripheral sector of the complex. Requires [4Fe-4S] cluster as cofactor.

The protein localises to the cell inner membrane. The catalysed reaction is a quinone + NADH + 5 H(+)(in) = a quinol + NAD(+) + 4 H(+)(out). In terms of biological role, NDH-1 shuttles electrons from NADH, via FMN and iron-sulfur (Fe-S) centers, to quinones in the respiratory chain. Couples the redox reaction to proton translocation (for every two electrons transferred, four hydrogen ions are translocated across the cytoplasmic membrane), and thus conserves the redox energy in a proton gradient. The sequence is that of NADH-quinone oxidoreductase subunit B 1 from Anaeromyxobacter sp. (strain Fw109-5).